The sequence spans 219 residues: Uracil-DNA glycosylase (219 aa).

The active-site Proton acceptor is Asp61.

Belongs to the uracil-DNA glycosylase (UDG) superfamily. UNG family.

The protein localises to the cytoplasm. It carries out the reaction Hydrolyzes single-stranded DNA or mismatched double-stranded DNA and polynucleotides, releasing free uracil.. Its function is as follows. Excises uracil residues from the DNA which can arise as a result of misincorporation of dUMP residues by DNA polymerase or due to deamination of cytosine. This Neisseria meningitidis serogroup A / serotype 4A (strain DSM 15465 / Z2491) protein is Uracil-DNA glycosylase.